Here is a 182-residue protein sequence, read N- to C-terminus: Large ribosomal subunit protein uL6 (182 aa).

The protein belongs to the universal ribosomal protein uL6 family. As to quaternary structure, part of the 50S ribosomal subunit.

In terms of biological role, this protein binds to the 23S rRNA, and is important in its secondary structure. It is located near the subunit interface in the base of the L7/L12 stalk, and near the tRNA binding site of the peptidyltransferase center. The polypeptide is Large ribosomal subunit protein uL6 (Desulforamulus reducens (strain ATCC BAA-1160 / DSM 100696 / MI-1) (Desulfotomaculum reducens)).